The following is a 324-amino-acid chain: Fructose-1,6-bisphosphatase class 1 (324 aa).

Mg(2+) contacts are provided by Glu-88, Asp-107, Leu-109, and Asp-110. Residues 110–113, Asn-199, and Lys-265 contribute to the substrate site; that span reads DGSS. A Mg(2+)-binding site is contributed by Glu-271.

Belongs to the FBPase class 1 family. As to quaternary structure, homotetramer. Mg(2+) is required as a cofactor.

It is found in the cytoplasm. The catalysed reaction is beta-D-fructose 1,6-bisphosphate + H2O = beta-D-fructose 6-phosphate + phosphate. Its pathway is carbohydrate biosynthesis; gluconeogenesis. In Neisseria meningitidis serogroup A / serotype 4A (strain DSM 15465 / Z2491), this protein is Fructose-1,6-bisphosphatase class 1.